The chain runs to 328 residues: MTGNAGEWCLMESDPGVFTELIKGFGCRGAQVEEIWSLEPENFEKLKPVHGLIFLFKWQPGEEPAGSVVQDSRLDTIFFAKQVINNACATQAIVSVLLNCTHQDVHLGETLSEFKEFSQSFDAAMKGLALSNSDVIRQVHNSFARQQMFEFDAKTAAKEEDAFHFVSYVPVNGRLYELDGLREGPIDLGACNQDDWISAVRPVIEKRIQKYSEGEIRFNLMAIVSDRKMIYEQKIAELQRQLAEEPMDTDQGSNMLSAIQSEVAKNQMLIEEEVQKLKRYKIENIRRKHNYLPFIMELLKTLAEHQQLIPLVEKAKEKQNAKKAQETK.

The 219-residue stretch at 7–225 (EWCLMESDPG…IRFNLMAIVS (219 aa)) folds into the UCH catalytic domain. Residue Lys47 is modified to N6-succinyllysine. Cys88 serves as the catalytic Nucleophile. At Lys158 the chain carries N6-acetyllysine. His164 acts as the Proton donor in catalysis. An N6-succinyllysine modification is found at Lys288. One can recognise a ULD domain in the interval 290 to 318 (NYLPFIMELLKTLAEHQQLIPLVEKAKEK). The tract at residues 312–328 (VEKAKEKQNAKKAQETK) is interaction with ADRM1.

Belongs to the peptidase C12 family. As to quaternary structure, component of the 19S (PA700) regulatory complex of the 26S proteasome. Interacts with ADRM1 and NFRKB. Component of the INO80 complex; specifically part of a complex module associated with N-terminus of INO80.

It localises to the cytoplasm. The protein resides in the nucleus. The enzyme catalyses Thiol-dependent hydrolysis of ester, thioester, amide, peptide and isopeptide bonds formed by the C-terminal Gly of ubiquitin (a 76-residue protein attached to proteins as an intracellular targeting signal).. Activated by ADRM1. Inhibited by interaction with NFRKB. Functionally, protease that specifically cleaves 'Lys-48'-linked polyubiquitin chains. Deubiquitinating enzyme associated with the 19S regulatory subunit of the 26S proteasome. Putative regulatory component of the INO80 complex; however is inactive in the INO80 complex and is activated by a transient interaction of the INO80 complex with the proteasome via ADRM1. The polypeptide is Ubiquitin carboxyl-terminal hydrolase isozyme L5 (UCHL5) (Bos taurus (Bovine)).